An 844-amino-acid polypeptide reads, in one-letter code: MSDSTVAASASASASSSAKSSLSDLRQFRINKNASSVVASPSRTERVPGKKRIQVMADSDSDGNDSQTPKKTKLELTVKEKEERYMAAAKISPHFDTMAIQESLSRTNWDVAASVRYLRENCKPKGHNGPLAKSKLKPRSNGISGGNFSDNDHSDDDDVKQSKDQVYDSDDSDSEMSTKMTGQRKKVFQFMNEASLIELQSVKTLSEKKALAIIDVRPFSDWSDLRQKLESIRMSGDLLNYAQELINKQNTVAAILSKCNNMVSRLEKAISNGAGIVEQPKLLSSGLQLADYQIIGLNWLTVMHKQEMNGILADEMGLGKTIQVIAFLAYLKENGLSQAAHLIVVPSSTLDNWEAEISRWCPELVVEKYHGSQDERRRMRGRFAKDGFTGFDVLLTTYHIVGSTPEERKMFRVCKLDYVIFDEAHMLKNMTTQRYANLITINARMRILLTGTPLQNNLLELISLLCFVMPKFFAKSIEDIKSLFAKKGKSDGDQDEVSQFQETQIQRAKRIMKPFVLRRLKKDVLKNLPKKLSLVEKVPMSSQQKIYYHELVDYYSNNKGEVCSSSERAGIAIMMEMRRIANHPLLMRHYFTDANLRGFSKRLANASSFKKTNEQYIFEELAVMSDFQVYQMMNKHEFYDVKIPDNLICDSGKFLYLDTLLPKLKAEGHRVLLFSQFTMMLDIVEEYLRIRKFGFCRLDGATAVNVRQDLITDFNGDDSIFVFLLSTKAGGVGINLTAADTCVIHDIDFNPYNDKQAEDRCHRMGQQRPVTIYRLISESTIEEGILMAAEEKLKLEKDITSNEKGEVHEQRCVVKLLTTALGLDKDQEEQLNNSLNNSIASPAK.

The span at 1–23 (MSDSTVAASASASASSSAKSSLS) shows a compositional bias: low complexity. 2 disordered regions span residues 1–75 (MSDS…TKLE) and 121–180 (NCKP…STKM). Residues 30 to 42 (INKNASSVVASPS) are compositionally biased toward polar residues. The Helicase ATP-binding domain occupies 301–471 (TVMHKQEMNG…ISLLCFVMPK (171 aa)). 314 to 321 (DEMGLGKT) is a binding site for ATP. Residues 422–425 (DEAH) carry the DEGH box motif. In terms of domain architecture, Helicase C-terminal spans 656–818 (YLDTLLPKLK…EQRCVVKLLT (163 aa)). A phosphoserine mark is found at Ser-834, Ser-838, and Ser-841.

It belongs to the SNF2/RAD54 helicase family.

The protein resides in the nucleus. It carries out the reaction ATP + H2O = ADP + phosphate + H(+). Functionally, DNA helicase that possesses intrinsic ATP-dependent nucleosome-remodeling activity and is both required for DNA repair and heterochromatin organization. Promotes DNA end resection of double-strand breaks (DSBs) following DNA damage: probably acts by weakening histone DNA interactions in nucleosomes flanking DSBs. The protein is SWI/SNF-related matrix-associated actin-dependent regulator of chromatin subfamily A containing DEAD/H box 1 homolog (Etl1) of Drosophila melanogaster (Fruit fly).